A 49-amino-acid chain; its full sequence is Small ribosomal subunit protein eS31 (49 aa).

Residues C21, C24, C39, and C42 each contribute to the Zn(2+) site. Residues 21–42 form a C4-type zinc finger; it reads CPRCGPGVFLADHKNRLACGKC.

This sequence belongs to the eukaryotic ribosomal protein eS31 family. In terms of assembly, part of the 30S ribosomal subunit. The cofactor is Zn(2+).

The sequence is that of Small ribosomal subunit protein eS31 from Methanosarcina mazei (strain ATCC BAA-159 / DSM 3647 / Goe1 / Go1 / JCM 11833 / OCM 88) (Methanosarcina frisia).